We begin with the raw amino-acid sequence, 196 residues long: Thymidine kinase (196 aa).

ATP is bound by residues 9-16 and 87-90; these read SAMNAGKS and DECQ. Glu-88 acts as the Proton acceptor in catalysis. The Zn(2+) site is built by Cys-145, Cys-147, Cys-182, and His-185.

It belongs to the thymidine kinase family. Homotetramer.

It is found in the cytoplasm. It carries out the reaction thymidine + ATP = dTMP + ADP + H(+). This chain is Thymidine kinase, found in Yersinia pestis.